The following is a 616-amino-acid chain: Dihydroxy-acid dehydratase (616 aa).

Asp81 contributes to the Mg(2+) binding site. A [2Fe-2S] cluster-binding site is contributed by Cys122. 2 residues coordinate Mg(2+): Asp123 and Lys124. Lys124 is subject to N6-carboxylysine. Cys195 is a [2Fe-2S] cluster binding site. Glu491 is a Mg(2+) binding site. The active-site Proton acceptor is Ser517.

Belongs to the IlvD/Edd family. In terms of assembly, homodimer. [2Fe-2S] cluster is required as a cofactor. Mg(2+) serves as cofactor.

It carries out the reaction (2R)-2,3-dihydroxy-3-methylbutanoate = 3-methyl-2-oxobutanoate + H2O. The enzyme catalyses (2R,3R)-2,3-dihydroxy-3-methylpentanoate = (S)-3-methyl-2-oxopentanoate + H2O. It participates in amino-acid biosynthesis; L-isoleucine biosynthesis; L-isoleucine from 2-oxobutanoate: step 3/4. The protein operates within amino-acid biosynthesis; L-valine biosynthesis; L-valine from pyruvate: step 3/4. Its function is as follows. Functions in the biosynthesis of branched-chain amino acids. Catalyzes the dehydration of (2R,3R)-2,3-dihydroxy-3-methylpentanoate (2,3-dihydroxy-3-methylvalerate) into 2-oxo-3-methylpentanoate (2-oxo-3-methylvalerate) and of (2R)-2,3-dihydroxy-3-methylbutanoate (2,3-dihydroxyisovalerate) into 2-oxo-3-methylbutanoate (2-oxoisovalerate), the penultimate precursor to L-isoleucine and L-valine, respectively. This Escherichia coli O1:K1 / APEC protein is Dihydroxy-acid dehydratase.